The chain runs to 445 residues: Methylenetetrahydrofolate--tRNA-(uracil-5-)-methyltransferase TrmFO (445 aa).

8–13 serves as a coordination point for FAD; that stretch reads GAGLAG.

The protein belongs to the MnmG family. TrmFO subfamily. FAD is required as a cofactor.

The protein resides in the cytoplasm. The catalysed reaction is uridine(54) in tRNA + (6R)-5,10-methylene-5,6,7,8-tetrahydrofolate + NADH + H(+) = 5-methyluridine(54) in tRNA + (6S)-5,6,7,8-tetrahydrofolate + NAD(+). It carries out the reaction uridine(54) in tRNA + (6R)-5,10-methylene-5,6,7,8-tetrahydrofolate + NADPH + H(+) = 5-methyluridine(54) in tRNA + (6S)-5,6,7,8-tetrahydrofolate + NADP(+). Functionally, catalyzes the folate-dependent formation of 5-methyl-uridine at position 54 (M-5-U54) in all tRNAs. The protein is Methylenetetrahydrofolate--tRNA-(uracil-5-)-methyltransferase TrmFO of Rhodobacter capsulatus (strain ATCC BAA-309 / NBRC 16581 / SB1003).